The following is an 847-amino-acid chain: MKNNNYNPKKIEKYVQKYWVKKKIFFTKIDKEKKKFYCLPMLPYPSGKLHMGHVRNYTISDVISRFHRMLGKNVLQPIGWDSFGLPAEETAIKNNISPKKWTFKNIKTMKKQLQSLGFSYDWNKEITTCNPEYYRWEQLFFIKLFKKKLIYKKKSIVNWCEKDKTVLANEQVQKGVCWRCGTKIKLRKISQWFIKIKKYADKFLKDLKLLKKWPKEVISMQKNWIGKSKGLKIKCKIYKKKYFLKIFTTKPETIMGISFFAISMYHPLINLFLRKNIEIQKFLKKNKYSINTEFQKSNILFGINTHLYVIHPINKKKIPLWISNYVKYNYATGAIMSVPCSNKIDYNFSKLYNIPFIKIFSKKNKKLLINSDNFNNLNIKKARNKISNFLINKKIAKKYIYYKIQDWCISRQRYWGTPIPIVIDNKKNIITVPKKKLPVILPKYIYKKKSLQSLSLYSLWLKTKISGKKVTRETDTLDTFMESSWYYARYTNPKYEKDIIDPKASEYWLPVDQYIGGIEHAVMHLIYFRFYHKLLYDFGYVQSKEPVKKLICQGMVIIDSFYKYNKDGSKKWLSISKIEINRDSKGKIISAIEKSSQKKIIYAGKIKMSKSKNNGIDPVNIIKQYGADSLRLFIMFAAPINISLEWNSKNIIGMHRFLKKIWNFVFIIIKKKKEKIKKIDLNKNKKTYIYKLNTIIKKVTYNIQERNSFNTAIAEIIKFFNYLVKLYKIYNIKKKNLIFCISTIIKMLYPFTPHICFILWKKIYGKKSCIEKETWPKFNKKFFLKEKNNIIIQINGKKKDIMKIHAIISKKEIIKLILKNEKIKKHLYKKIIKKTIYIPNKVINFVL.

A 'HIGH' region motif is present at residues 43 to 53 (PYPSGKLHMGH). Residues 607 to 611 (KMSKS) carry the 'KMSKS' region motif. K610 is an ATP binding site.

Belongs to the class-I aminoacyl-tRNA synthetase family.

The protein localises to the cytoplasm. It carries out the reaction tRNA(Leu) + L-leucine + ATP = L-leucyl-tRNA(Leu) + AMP + diphosphate. This chain is Leucine--tRNA ligase, found in Buchnera aphidicola subsp. Cinara cedri (strain Cc).